A 316-amino-acid polypeptide reads, in one-letter code: tRNA dimethylallyltransferase (316 aa).

17–24 (GPTASGKT) contributes to the ATP binding site. 19–24 (TASGKT) is a binding site for substrate. Interaction with substrate tRNA regions lie at residues 42 to 45 (DSAL), 166 to 170 (QRLSR), and 247 to 252 (RCVGYR).

It belongs to the IPP transferase family. Monomer. Mg(2+) is required as a cofactor.

The catalysed reaction is adenosine(37) in tRNA + dimethylallyl diphosphate = N(6)-dimethylallyladenosine(37) in tRNA + diphosphate. Its function is as follows. Catalyzes the transfer of a dimethylallyl group onto the adenine at position 37 in tRNAs that read codons beginning with uridine, leading to the formation of N6-(dimethylallyl)adenosine (i(6)A). This chain is tRNA dimethylallyltransferase, found in Salmonella typhi.